We begin with the raw amino-acid sequence, 214 residues long: Probable transaldolase (214 aa).

Lys-83 acts as the Schiff-base intermediate with substrate in catalysis.

This sequence belongs to the transaldolase family. Type 3B subfamily.

It localises to the cytoplasm. It catalyses the reaction D-sedoheptulose 7-phosphate + D-glyceraldehyde 3-phosphate = D-erythrose 4-phosphate + beta-D-fructose 6-phosphate. It participates in carbohydrate degradation; pentose phosphate pathway; D-glyceraldehyde 3-phosphate and beta-D-fructose 6-phosphate from D-ribose 5-phosphate and D-xylulose 5-phosphate (non-oxidative stage): step 2/3. In terms of biological role, transaldolase is important for the balance of metabolites in the pentose-phosphate pathway. This Brevibacillus brevis (strain 47 / JCM 6285 / NBRC 100599) protein is Probable transaldolase.